The following is a 494-amino-acid chain: Sphingosine-1-phosphate transporter MFSD2B (494 aa).

The span at 1–12 (MSVPHGPTPAPV) shows a compositional bias: pro residues. The disordered stretch occupies residues 1–26 (MSVPHGPTPAPVAEPHTQEPGSDKRD). Helical transmembrane passes span 103-123 (LMPW…FLWF), 140-160 (CLFQ…TMIL), 179-199 (MAGT…AHGS), 223-243 (IAAA…CLGV), 277-297 (VVSF…LVLF), 310-330 (NLVL…EWVL), 339-359 (AFGI…PSAP), 360-380 (VAYV…LLPW), 402-422 (TIFY…ALGI), and 449-469 (VLIG…LLVG). The interval 473–494 (KMPRQDTSSQLSLRRRTSYSLA) is disordered. Basic residues predominate over residues 485-494 (LRRRTSYSLA).

Belongs to the major facilitator superfamily. As to expression, widely expressed with highest expression in spleen, lung and testis. Predominantly expressed in erythroid lineages giving rise to erythrocytes and platelets, but absent in lymphoid lineages.

Its subcellular location is the cell membrane. The enzyme catalyses sphing-4-enine 1-phosphate(in) = sphing-4-enine 1-phosphate(out). It carries out the reaction sphinganine 1-phosphate(in) = sphinganine 1-phosphate(out). It catalyses the reaction sphinga-4E,14Z-dienine-1-phosphate(in) = sphinga-4E,14Z-dienine-1-phosphate(out). Functionally, lipid transporter that specifically mediates export of sphingosine-1-phosphate in red blood cells and platelets. Sphingosine-1-phosphate is a signaling sphingolipid and its export from red blood cells into in the plasma is required for red blood cell morphology. Sphingosine-1-phosphate export from platelets is required for platelet aggregation and thrombus formation. Mediates the export of different sphingosine-1-phosphate (S1P) species, including S1P(d18:0) (sphinganine 1-phosphate), S1P (d18:1) (sphing-4-enine 1-phosphate) and S1P (d18:2) (sphinga-4E,14Z-dienine-1-phosphate). Release of sphingosine-1-phosphate is facilitated by a proton gradient. In contrast, cations, such as sodium, are not required to drive sphingosine-1-phosphate transport. In addition to export, also able to mediate S1P import. Does not transport lysophosphatidylcholine (LPC). The polypeptide is Sphingosine-1-phosphate transporter MFSD2B (Mus musculus (Mouse)).